A 396-amino-acid polypeptide reads, in one-letter code: Phosphoglycerate kinase (396 aa).

Substrate contacts are provided by residues 21 to 23 (DFN), R37, 60 to 63 (HLGR), R121, and R154. Residues K205, G296, E327, and 353–356 (GGDS) contribute to the ATP site.

This sequence belongs to the phosphoglycerate kinase family. As to quaternary structure, monomer.

The protein localises to the cytoplasm. The enzyme catalyses (2R)-3-phosphoglycerate + ATP = (2R)-3-phospho-glyceroyl phosphate + ADP. Its pathway is carbohydrate degradation; glycolysis; pyruvate from D-glyceraldehyde 3-phosphate: step 2/5. The chain is Phosphoglycerate kinase from Anaeromyxobacter sp. (strain Fw109-5).